Consider the following 117-residue polypeptide: MHEYSVVSSLIALCEEHAKKNQAHKIERVVVGIGERSAMDKSLFVSAFETFREESLVCKDAILDIVDEKVELECKDCSHVFKPNALDYGVCEKCHSKNVIITQGNEMRLLSLEMLAE.

His-2 lines the Ni(2+) pocket. Zn(2+)-binding residues include Cys-74, Cys-77, Cys-91, and Cys-94.

It belongs to the HypA/HybF family.

Functionally, involved in the maturation of [NiFe] hydrogenases. Required for nickel insertion into the metal center of the hydrogenase. The polypeptide is Hydrogenase maturation factor HypA (Helicobacter pylori (strain J99 / ATCC 700824) (Campylobacter pylori J99)).